We begin with the raw amino-acid sequence, 256 residues long: Protein FixA (256 aa).

It belongs to the ETF beta-subunit/FixA family. Heterodimer of FixA and FixB.

It functions in the pathway amine and polyamine metabolism; carnitine metabolism. Functionally, required for anaerobic carnitine reduction. May bring reductant to CaiA. This chain is Protein FixA, found in Shigella flexneri serotype 5b (strain 8401).